A 222-amino-acid chain; its full sequence is MPDAVRRCPEDGFFEGDTCPVCDGAGTHILDGARRRQLSKFVSGALRHFPEDAGIEVDKAGWTGFDALRVAVERQYDWADAAALAGVIATDPKGRFERTGVGNEAGITTAGGRVRAAYGHSVDVTLDGTDDPVPATLYHGTAPRNVDSIREAGLKPMSRQTVHLSESAAAAREVGRRHAADPVVFVVDATAMQSDDRRIVKRGTETYTTDRVSPVYLSLLEK.

It belongs to the KptA/TPT1 family.

Functionally, removes the 2'-phosphate from RNA via an intermediate in which the phosphate is ADP-ribosylated by NAD followed by a presumed transesterification to release the RNA and generate ADP-ribose 1''-2''-cyclic phosphate (APPR&gt;P). May function as an ADP-ribosylase. The protein is Probable RNA 2'-phosphotransferase of Haloarcula marismortui (strain ATCC 43049 / DSM 3752 / JCM 8966 / VKM B-1809) (Halobacterium marismortui).